The following is a 590-amino-acid chain: 2-hydroxyacyl-CoA lyase (590 aa).

2-hydroxyisobutanoyl-CoA is bound by residues Gly43, Gln128, Gln255, 273–274 (RS), and Arg362. 410–412 (GDL) lines the thiamine diphosphate pocket. Residue Arg417 participates in 2-hydroxyisobutanoyl-CoA binding. Gly433 provides a ligand contact to thiamine diphosphate. Residue Asp460 coordinates Mg(2+). Residues 461 to 462 (GA) and 487 to 492 (NRAWNI) contribute to the thiamine diphosphate site. Mg(2+) is bound by residues Asn487 and Ala489. Glu493 functions as the Proton acceptor in the catalytic mechanism. 2-hydroxyisobutanoyl-CoA is bound at residue 561 to 564 (DSGK). The tract at residues 566–590 (LGFVPDYQALTPWNDAEVARRQEGI) is C-terminal lid.

This sequence belongs to the TPP enzyme family. As to quaternary structure, a homotetramer formed by a dimer of dimers; active sites are located in the dimer interface. Mg(2+) serves as cofactor. The cofactor is thiamine diphosphate.

It catalyses the reaction 2-hydroxyisobutanoyl-CoA = formyl-CoA + acetone. Activity is stimulated by thiamine diphosphate. Its function is as follows. A lyase that reversibly degrades 2-hydroxyisobutyryl-CoA (2-HIB-CoA) to acetone and formyl-CoA. Probably also cleaves 2-hydroxy-2-methylbutyryl-CoA to butanone and formyl-CoA. Does not act on 2-hydroxy-2-ethylbutyryl-CoA. A C-terminal lid closes the active site upon substrate binding, and with residues Leu-127 and Ile-492 restricts the size of the active site cavity so it can only use short-chain (C4 and C5) acyl substrates. Part of a pathway that allows cells to grow on 2-methylpropane-1,2-diol or 2-hydroxyisobutyric acid (2-HIBA) as a sole carbon source. This Actinomycetospora chiangmaiensis (strain DSM 45062 / JCM 15998 / CCTCC AA 205017 / NBRC 104400 / YIM 0006) protein is 2-hydroxyacyl-CoA lyase.